The chain runs to 464 residues: tRNA modification GTPase MnmE (464 aa).

(6S)-5-formyl-5,6,7,8-tetrahydrofolate contacts are provided by Arg25, Glu87, and Lys130. Residues Gly226–Gly386 form the TrmE-type G domain. Residue Asn236 coordinates K(+). GTP contacts are provided by residues Asn236 to Ser241, Thr255 to Thr261, and Asp280 to Gly283. Residue Ser240 participates in Mg(2+) binding. Positions 255, 257, and 260 each coordinate K(+). Residue Thr261 participates in Mg(2+) binding. Lys464 serves as a coordination point for (6S)-5-formyl-5,6,7,8-tetrahydrofolate.

Belongs to the TRAFAC class TrmE-Era-EngA-EngB-Septin-like GTPase superfamily. TrmE GTPase family. In terms of assembly, homodimer. Heterotetramer of two MnmE and two MnmG subunits. K(+) is required as a cofactor.

It is found in the cytoplasm. Exhibits a very high intrinsic GTPase hydrolysis rate. Involved in the addition of a carboxymethylaminomethyl (cmnm) group at the wobble position (U34) of certain tRNAs, forming tRNA-cmnm(5)s(2)U34. This is tRNA modification GTPase MnmE from Burkholderia lata (strain ATCC 17760 / DSM 23089 / LMG 22485 / NCIMB 9086 / R18194 / 383).